The sequence spans 338 residues: 3 beta-hydroxysteroid dehydrogenase type 7 (338 aa).

Catalysis depends on Tyr159, which acts as the Proton acceptor. Lys163 contributes to the NAD(+) binding site. A run of 2 helical transmembrane segments spans residues 258-278 (LLPY…QWLL) and 280-300 (PLVL…NTTF).

The protein belongs to the 3-beta-HSD family. High levels in liver and lung, moderate levels in spleen, brain, heart, kidney, jejunum and testis. Up-regulated in 3Y1 cells upon growth arrest.

It localises to the endoplasmic reticulum membrane. The enzyme catalyses 7alpha-hydroxycholesterol + NAD(+) = 7alpha-hydroxycholest-4-en-3-one + NADH + H(+). The catalysed reaction is 7alpha,25-dihydroxycholesterol + NAD(+) = 7alpha,25-dihydroxy-4-cholesten-3-one + NADH + H(+). It catalyses the reaction (25R)-cholest-5-en-3beta,7alpha,26-triol + NAD(+) = (25R)-7alpha,26-dihydroxycholest-4-en-3-one + NADH + H(+). It carries out the reaction (24S)-7alpha-dihydroxycholesterol + NAD(+) = (24S)-7alpha,24-dihydroxycholest-4-en-3-one + NADH + H(+). It participates in lipid metabolism; steroid biosynthesis. The 3-beta-HSD enzymatic system plays a crucial role in the biosynthesis of all classes of hormonal steroids. HSD VII is active against four 7-alpha-hydroxylated sterols. Does not metabolize several different C(19/21) steroids as substrates. Involved in bile acid synthesis. Plays a key role in cell positioning and movement in lymphoid tissues by mediating degradation of 7-alpha,25-dihydroxycholesterol (7-alpha,25-OHC): 7-alpha,25-OHC acts as a ligand for the G protein-coupled receptor GPR183/EBI2, a chemotactic receptor for a number of lymphoid cells. In Rattus norvegicus (Rat), this protein is 3 beta-hydroxysteroid dehydrogenase type 7.